The primary structure comprises 113 residues: Hydrogenase maturation factor HypA (113 aa).

Residue His-2 coordinates Ni(2+). 4 residues coordinate Zn(2+): Cys-73, Cys-76, Cys-89, and Cys-92.

Belongs to the HypA/HybF family.

Involved in the maturation of [NiFe] hydrogenases. Required for nickel insertion into the metal center of the hydrogenase. This Cereibacter sphaeroides (strain ATCC 17023 / DSM 158 / JCM 6121 / CCUG 31486 / LMG 2827 / NBRC 12203 / NCIMB 8253 / ATH 2.4.1.) (Rhodobacter sphaeroides) protein is Hydrogenase maturation factor HypA.